We begin with the raw amino-acid sequence, 486 residues long: FAD-dependent oxidoreductase domain-containing protein 1 (486 aa).

Residues 66-82 traverse the membrane as a helical segment; it reads VVIVGGGVLGLSVAYWL.

In terms of assembly, associates with components of the mitochondrial respiratory chain complex I. FAD serves as cofactor.

Its subcellular location is the mitochondrion inner membrane. Required for the assembly of the mitochondrial membrane respiratory chain NADH dehydrogenase (Complex I). Involved in mid-late stages of complex I assembly. In Bos taurus (Bovine), this protein is FAD-dependent oxidoreductase domain-containing protein 1 (FOXRED1).